The chain runs to 294 residues: NADH-cytochrome b5 reductase 1 (294 aa).

The helical transmembrane segment at 13–33 (PHASFLGGLVVAAILGLFIFF) threads the bilayer. In terms of domain architecture, FAD-binding FR-type spans 44 to 147 (VEWRSFKLVD…KGPKGKFVYT (104 aa)). Residues 127–142 (SLLT…GPKG) and 153–185 (HLVM…RLSL) each bind FAD.

The protein belongs to the flavoprotein pyridine nucleotide cytochrome reductase family. As to quaternary structure, monomer. Component of the 2-(3-amino-3-carboxypropyl)histidine synthase complex composed of DPH1, DPH2, DPH3 and a NADH-dependent reductase, predominantly CBR1. It depends on FAD as a cofactor.

The protein localises to the mitochondrion outer membrane. The catalysed reaction is 2 Fe(III)-[cytochrome b5] + NADH = 2 Fe(II)-[cytochrome b5] + NAD(+) + H(+). It carries out the reaction 2 Fe(3+)-[Dph3] + NADH = 2 Fe(2+)-[Dph3] + NAD(+) + H(+). It functions in the pathway protein modification; peptidyl-diphthamide biosynthesis. Its function is as follows. NADH-dependent reductase for DPH3 and cytochrome b5. Required for the first step of diphthamide biosynthesis, a post-translational modification of histidine which occurs in elongation factor 2. DPH1 and DPH2 transfer a 3-amino-3-carboxypropyl (ACP) group from S-adenosyl-L-methionine (SAM) to a histidine residue, the reaction is assisted by a reduction system comprising DPH3 and a NADH-dependent reductase, predominantly CBR1. By reducing DPH3, also involved in the formation of the tRNA wobble base modification mcm5s 2U (5-methoxycarbonylmethyl-2-thiouridine), mediated by the elongator complex. The cytochrome b5/NADH cytochrome b5 reductase electron transfer system supports the catalytic activity of several sterol biosynthetic enzymes. The polypeptide is NADH-cytochrome b5 reductase 1 (CBR1) (Cryptococcus neoformans var. neoformans serotype D (strain B-3501A) (Filobasidiella neoformans)).